Here is a 1235-residue protein sequence, read N- to C-terminus: Structural maintenance of chromosomes protein 1B (1235 aa).

32 to 39 (GPNGSGKS) serves as a coordination point for ATP. Residues 156–490 (EEISTSGELI…RSELQNAGID (335 aa)) are a coiled coil. One can recognise an SMC hinge domain in the interval 514–629 (SVFGRLFDLC…ETMEEARHIA (116 aa)). An N6-acetyllysine mark is found at lysine 648 and lysine 713. 3 coiled-coil regions span residues 666–934 (WDEK…LDCK), 970–994 (EKEE…SDQE), and 1022–1049 (RALE…KEAR). N6-acetyllysine is present on lysine 1033.

This sequence belongs to the SMC family. SMC1 subfamily. In terms of assembly, forms a heterodimer with SMC3. Component of a meiosis-specific cohesin complex, probably composed of the SMC1B and SMC3 heterodimer attached via their SMC hinge domain, RAD21 (or its meiosis-specific related protein REC8), which link them, and STAG3, which interacts with RAD21 or REC8. The cohesin complex interacts with the cohesin loading complex subunits NIPBL/Scc2 (via HEAT repeats) and MAU2/Scc4. NIPBL directly contacts all members of the complex, RAD21, SMC1A/B, SMC3 and STAG1.

The protein localises to the nucleus. The protein resides in the chromosome. It localises to the centromere. Meiosis-specific component of cohesin complex. Required for the maintenance of meiotic cohesion, but not, or only to a minor extent, for its establishment. Contributes to axial element (AE) formation and the organization of chromatin loops along the AE. Plays a key role in synapsis, recombination and chromosome movements. The cohesin complex is required for the cohesion of sister chromatids after DNA replication. The cohesin complex apparently forms a large proteinaceous ring within which sister chromatids can be trapped. At anaphase, the complex is cleaved and dissociates from chromatin, allowing sister chromatids to segregate. The meiosis-specific cohesin complex probably replaces mitosis specific cohesin complex when it dissociates from chromatin during prophase I. The sequence is that of Structural maintenance of chromosomes protein 1B (SMC1B) from Homo sapiens (Human).